The chain runs to 485 residues: Glutamate--tRNA ligase (485 aa).

The 'HIGH' region signature appears at 11-21 (PSPTGHLHIGG). A 'KMSKS' region motif is present at residues 252–256 (KMSKR). An ATP-binding site is contributed by Lys-255.

The protein belongs to the class-I aminoacyl-tRNA synthetase family. Glutamate--tRNA ligase type 1 subfamily. In terms of assembly, monomer.

It localises to the cytoplasm. The catalysed reaction is tRNA(Glu) + L-glutamate + ATP = L-glutamyl-tRNA(Glu) + AMP + diphosphate. Its function is as follows. Catalyzes the attachment of glutamate to tRNA(Glu) in a two-step reaction: glutamate is first activated by ATP to form Glu-AMP and then transferred to the acceptor end of tRNA(Glu). The chain is Glutamate--tRNA ligase from Halalkalibacterium halodurans (strain ATCC BAA-125 / DSM 18197 / FERM 7344 / JCM 9153 / C-125) (Bacillus halodurans).